A 146-amino-acid chain; its full sequence is Hemoglobin subunit beta (146 aa).

N-acetylvaline is present on Val1. The Globin domain occupies 2–146 (HLTADEKTAV…VANALAHKYH (145 aa)). Position 12 is a phosphothreonine (Thr12). At Ser44 the chain carries Phosphoserine. Lys59 bears the N6-acetyllysine mark. Residue His63 coordinates heme b. Lys82 carries the N6-acetyllysine modification. Residue His92 coordinates heme b. At Cys93 the chain carries S-nitrosocysteine. Position 144 is an N6-acetyllysine (Lys144).

The protein belongs to the globin family. In terms of assembly, heterotetramer of two alpha chains and two beta chains. Red blood cells.

In terms of biological role, involved in oxygen transport from the lung to the various peripheral tissues. The polypeptide is Hemoglobin subunit beta (HBB) (Procyon lotor (Raccoon)).